We begin with the raw amino-acid sequence, 415 residues long: Serine--tRNA ligase (415 aa).

An L-serine-binding site is contributed by 231–233 (TAE). Position 262-264 (262-264 (RSE)) interacts with ATP. An L-serine-binding site is contributed by glutamate 285. 349–352 (EISS) contacts ATP. Serine 383 is an L-serine binding site.

The protein belongs to the class-II aminoacyl-tRNA synthetase family. Type-1 seryl-tRNA synthetase subfamily. Homodimer. The tRNA molecule binds across the dimer.

It localises to the cytoplasm. It carries out the reaction tRNA(Ser) + L-serine + ATP = L-seryl-tRNA(Ser) + AMP + diphosphate + H(+). The catalysed reaction is tRNA(Sec) + L-serine + ATP = L-seryl-tRNA(Sec) + AMP + diphosphate + H(+). It functions in the pathway aminoacyl-tRNA biosynthesis; selenocysteinyl-tRNA(Sec) biosynthesis; L-seryl-tRNA(Sec) from L-serine and tRNA(Sec): step 1/1. Functionally, catalyzes the attachment of serine to tRNA(Ser). Is also able to aminoacylate tRNA(Sec) with serine, to form the misacylated tRNA L-seryl-tRNA(Sec), which will be further converted into selenocysteinyl-tRNA(Sec). This Helicobacter acinonychis (strain Sheeba) protein is Serine--tRNA ligase.